Here is a 111-residue protein sequence, read N- to C-terminus: Shuttling pre-60S factor C23B6.02c (111 aa).

2 stretches are compositionally biased toward basic residues: residues 1–12 (MAKKQSIRSRNF) and 59–73 (SKKK…KKAK). Disordered stretches follow at residues 1–25 (MAKK…DSST) and 47–111 (ALRS…QGDE). The segment covering 83–111 (QAREERLDTKISKSLQKQEKLKARKQGDE) has biased composition (basic and acidic residues).

It belongs to the ECM1 family. As to quaternary structure, associates with the pre-60S ribosomal particle and the nucleopore complex.

The protein localises to the nucleus. It localises to the nucleolus. The protein resides in the cytoplasm. Its function is as follows. Pre-ribosomal factor involved in 60S ribosomal protein subunit export from the nucleus. This is Shuttling pre-60S factor C23B6.02c from Schizosaccharomyces pombe (strain 972 / ATCC 24843) (Fission yeast).